Here is a 131-residue protein sequence, read N- to C-terminus: Large-conductance mechanosensitive channel (131 aa).

3 helical membrane-spanning segments follow: residues 8 to 28, 30 to 50, and 67 to 87; these read FAMR…GAFG, IVSS…LGGV, and GMFI…FVFV.

This sequence belongs to the MscL family. As to quaternary structure, homopentamer.

The protein resides in the cell membrane. Channel that opens in response to stretch forces in the membrane lipid bilayer. May participate in the regulation of osmotic pressure changes within the cell. In Geobacillus sp. (strain WCH70), this protein is Large-conductance mechanosensitive channel.